A 231-amino-acid chain; its full sequence is tRNA (guanine-N(1)-)-methyltransferase (231 aa).

S-adenosyl-L-methionine contacts are provided by residues glycine 112 and leucine 132 to leucine 137.

Belongs to the RNA methyltransferase TrmD family. In terms of assembly, homodimer.

Its subcellular location is the cytoplasm. The enzyme catalyses guanosine(37) in tRNA + S-adenosyl-L-methionine = N(1)-methylguanosine(37) in tRNA + S-adenosyl-L-homocysteine + H(+). Functionally, specifically methylates guanosine-37 in various tRNAs. This is tRNA (guanine-N(1)-)-methyltransferase from Microcystis aeruginosa (strain NIES-843 / IAM M-2473).